We begin with the raw amino-acid sequence, 1115 residues long: Rho GTPase-activating protein gacW (1115 aa).

The tract at residues 661-691 (PPIGPPSTPTKSSNPGFQTLPKRPTRGPLYP) is disordered. In terms of domain architecture, Rho-GAP spans 699-880 (VTLTDKAQIN…FMIVNYFDIF (182 aa)). Disordered stretches follow at residues 888-1065 (SSDN…GDGK) and 1092-1115 (ESRT…GPSL). The span at 898-929 (DSTQSTCTTNNNNLVATSLSSPISPSTTPTKS) shows a compositional bias: low complexity. Composition is skewed to polar residues over residues 934–943 (LHTTVEVSRS) and 959–990 (RPIS…SRPS). A compositionally biased stretch (low complexity) spans 1013–1046 (SNHSSSGQLNNNNSNNNTTSNSSNSSSGKSSSNP).

The protein resides in the cytoplasm. Functionally, rho GTPase-activating protein involved in the signal transduction pathway. This chain is Rho GTPase-activating protein gacW (gacW), found in Dictyostelium discoideum (Social amoeba).